The primary structure comprises 253 residues: Demethylmenaquinone methyltransferase (253 aa).

S-adenosyl-L-methionine is bound by residues Thr-62, Asp-80, 102-103, and Ser-119; that span reads DA.

The protein belongs to the class I-like SAM-binding methyltransferase superfamily. MenG/UbiE family.

The catalysed reaction is a 2-demethylmenaquinol + S-adenosyl-L-methionine = a menaquinol + S-adenosyl-L-homocysteine + H(+). Its pathway is quinol/quinone metabolism; menaquinone biosynthesis; menaquinol from 1,4-dihydroxy-2-naphthoate: step 2/2. Methyltransferase required for the conversion of demethylmenaquinol (DMKH2) to menaquinol (MKH2). The chain is Demethylmenaquinone methyltransferase from Paenarthrobacter aurescens (strain TC1).